We begin with the raw amino-acid sequence, 205 residues long: UPF0111 protein YkaA (205 aa).

The protein belongs to the UPF0111 family.

This is UPF0111 protein YkaA (ykaA) from Bacillus subtilis (strain 168).